A 286-amino-acid polypeptide reads, in one-letter code: Phycobilisome 32.1 kDa linker polypeptide, phycocyanin-associated, rod (286 aa).

Residues 2–180 enclose the PBS-linker domain; sequence AITTAASRLG…LYRGYANSDR (179 aa). The CpcD-like domain maps to 234 to 286; that stretch reads DRVYRLEVTGIRSPGYPSVRRSSTVFIVPYERLSDKIQQVHKQGGKIVSVTSA.

Belongs to the phycobilisome linker protein family. Associated with the phycobilisome, a hemidiscoidal structure that is composed of two distinct substructures: a core complex and a number of rods radiating from the core.

Its subcellular location is the cellular thylakoid membrane. Its function is as follows. Rod linker protein, associated with phycocyanin. Linker polypeptides determine the state of aggregation and the location of the disk-shaped phycobiliprotein units within the phycobilisome and modulate their spectroscopic properties in order to mediate a directed and optimal energy transfer. In Nostoc sp. (strain PCC 7120 / SAG 25.82 / UTEX 2576), this protein is Phycobilisome 32.1 kDa linker polypeptide, phycocyanin-associated, rod (cpcC).